Consider the following 357-residue polypeptide: Mannonate dehydratase (357 aa).

The protein belongs to the mannonate dehydratase family. Fe(2+) is required as a cofactor. The cofactor is Mn(2+).

It carries out the reaction D-mannonate = 2-dehydro-3-deoxy-D-gluconate + H2O. It participates in carbohydrate metabolism; pentose and glucuronate interconversion. In terms of biological role, catalyzes the dehydration of D-mannonate. The sequence is that of Mannonate dehydratase from Sorangium cellulosum (strain So ce56) (Polyangium cellulosum (strain So ce56)).